A 159-amino-acid chain; its full sequence is Small ribosomal subunit protein uS9 (159 aa).

Belongs to the universal ribosomal protein uS9 family.

The chain is Small ribosomal subunit protein uS9 from Bradyrhizobium diazoefficiens (strain JCM 10833 / BCRC 13528 / IAM 13628 / NBRC 14792 / USDA 110).